The primary structure comprises 814 residues: Acyl-coenzyme A dehydrogenase (814 aa).

Glu497 serves as the catalytic Proton acceptor.

The protein belongs to the acyl-CoA dehydrogenase family. Requires FAD as cofactor.

It catalyses the reaction a medium-chain 2,3-saturated fatty acyl-CoA + oxidized [electron-transfer flavoprotein] + H(+) = a medium-chain (2E)-enoyl-CoA + reduced [electron-transfer flavoprotein]. The catalysed reaction is a long-chain 2,3-saturated fatty acyl-CoA + oxidized [electron-transfer flavoprotein] + H(+) = a long-chain (2E)-enoyl-CoA + reduced [electron-transfer flavoprotein]. It participates in lipid metabolism; fatty acid beta-oxidation. Catalyzes the dehydrogenation of acyl-coenzymes A (acyl-CoAs) to 2-enoyl-CoAs, the first step of the beta-oxidation cycle of fatty acid degradation. Is required for E.coli to utilize dodecanoate or oleate as the sole carbon and energy source for growth. This Escherichia coli (strain K12) protein is Acyl-coenzyme A dehydrogenase.